A 499-amino-acid polypeptide reads, in one-letter code: Protein nucleotidyltransferase YdiU (499 aa).

Residues G95, G97, R98, K117, D129, G130, R180, and R187 each coordinate ATP. Residue D256 is the Proton acceptor of the active site. Positions 257 and 266 each coordinate Mg(2+). ATP is bound at residue D266.

It belongs to the SELO family. The cofactor is Mg(2+). Requires Mn(2+) as cofactor.

It carries out the reaction L-seryl-[protein] + ATP = 3-O-(5'-adenylyl)-L-seryl-[protein] + diphosphate. The catalysed reaction is L-threonyl-[protein] + ATP = 3-O-(5'-adenylyl)-L-threonyl-[protein] + diphosphate. It catalyses the reaction L-tyrosyl-[protein] + ATP = O-(5'-adenylyl)-L-tyrosyl-[protein] + diphosphate. The enzyme catalyses L-histidyl-[protein] + UTP = N(tele)-(5'-uridylyl)-L-histidyl-[protein] + diphosphate. It carries out the reaction L-seryl-[protein] + UTP = O-(5'-uridylyl)-L-seryl-[protein] + diphosphate. The catalysed reaction is L-tyrosyl-[protein] + UTP = O-(5'-uridylyl)-L-tyrosyl-[protein] + diphosphate. In terms of biological role, nucleotidyltransferase involved in the post-translational modification of proteins. It can catalyze the addition of adenosine monophosphate (AMP) or uridine monophosphate (UMP) to a protein, resulting in modifications known as AMPylation and UMPylation. The chain is Protein nucleotidyltransferase YdiU from Dechloromonas aromatica (strain RCB).